The chain runs to 110 residues: Nucleoid-associated protein Ent638_0951 (110 aa).

Belongs to the YbaB/EbfC family. As to quaternary structure, homodimer.

The protein localises to the cytoplasm. Its subcellular location is the nucleoid. Functionally, binds to DNA and alters its conformation. May be involved in regulation of gene expression, nucleoid organization and DNA protection. This is Nucleoid-associated protein Ent638_0951 from Enterobacter sp. (strain 638).